Reading from the N-terminus, the 774-residue chain is Pentatricopeptide repeat-containing protein At4g20770 (774 aa).

20 PPR repeats span residues Gly5–Ser39, Asp40–Arg70, Asp71–Arg101, Asp102–Pro136, Ser137–Lys171, Asn172–Pro203, Asn204–Val238, Asp239–Gln270, Asp283–Val313, Asn314–Pro348, Asn349–Pro379, Ser380–Pro414, Asp415–Lys449, Asn450–Glu480, Asp482–Cys516, Asn518–Ser552, Asp553–Lys583, Asn584–Pro618, Asp619–Pro654, and Glu655–Lys685. Residues Leu690 to Gly765 form a type E motif region.

This sequence belongs to the PPR family. PCMP-E subfamily.

In Arabidopsis thaliana (Mouse-ear cress), this protein is Pentatricopeptide repeat-containing protein At4g20770 (PCMP-E35).